The sequence spans 172 residues: MERAAKKEAVEQLHEVFKTTGVAVVAHYSGLTVAQMQNLRKQMKQAGASVKVSKNRLAKIALEGTDVVGIGPLLKGPTVIATSNDPVAAPKVAIEFAKANEKFVILGGSMGSTVLNVDSVKALASLPSLDELRGKLVGLIQAPATKLAQLANAPAAKVARVIQAHASKGEAA.

This sequence belongs to the universal ribosomal protein uL10 family. In terms of assembly, part of the ribosomal stalk of the 50S ribosomal subunit. The N-terminus interacts with L11 and the large rRNA to form the base of the stalk. The C-terminus forms an elongated spine to which L12 dimers bind in a sequential fashion forming a multimeric L10(L12)X complex.

Forms part of the ribosomal stalk, playing a central role in the interaction of the ribosome with GTP-bound translation factors. In Bradyrhizobium sp. (strain ORS 278), this protein is Large ribosomal subunit protein uL10.